The following is a 203-amino-acid chain: Recombination protein RecR (203 aa).

A C4-type zinc finger spans residues cysteine 57–cysteine 72. The Toprim domain maps to glycine 80–proline 175.

This sequence belongs to the RecR family.

May play a role in DNA repair. It seems to be involved in an RecBC-independent recombinational process of DNA repair. It may act with RecF and RecO. In Chromohalobacter salexigens (strain ATCC BAA-138 / DSM 3043 / CIP 106854 / NCIMB 13768 / 1H11), this protein is Recombination protein RecR.